Here is a 204-residue protein sequence, read N- to C-terminus: Probable proteasome subunit beta type-3 (204 aa).

Belongs to the peptidase T1B family. As to quaternary structure, the 26S proteasome consists of a 20S proteasome core and two 19S regulatory subunits. The 20S proteasome core is composed of 28 subunits that are arranged in four stacked rings, resulting in a barrel-shaped structure. The two end rings are each formed by seven alpha subunits, and the two central rings are each formed by seven beta subunits. The catalytic chamber with the active sites is on the inside of the barrel.

The protein localises to the cytoplasm. The protein resides in the nucleus. Non-catalytic component of the proteasome, a multicatalytic proteinase complex which is characterized by its ability to cleave peptides with Arg, Phe, Tyr, Leu, and Glu adjacent to the leaving group at neutral or slightly basic pH. The proteasome has an ATP-dependent proteolytic activity. This is Probable proteasome subunit beta type-3 (pup3) from Schizosaccharomyces pombe (strain 972 / ATCC 24843) (Fission yeast).